Here is a 162-residue protein sequence, read N- to C-terminus: Cytochrome c-type biogenesis protein CcmE (162 aa).

At 1 to 8 (MNPVRKKR) the chain is on the cytoplasmic side. Residues 9-29 (LIIVLAILVGVGAAVGLALSA) traverse the membrane as a helical; Signal-anchor for type II membrane protein segment. Residues 30-162 (LQQNINLFYT…GETSYNQEGK (133 aa)) are Periplasmic-facing. The heme site is built by H124 and Y128. The span at 139–148 (DSGQLKHYEN) shows a compositional bias: basic and acidic residues. The interval 139-162 (DSGQLKHYENGKAAGETSYNQEGK) is disordered.

The protein belongs to the CcmE/CycJ family.

The protein resides in the cell inner membrane. Heme chaperone required for the biogenesis of c-type cytochromes. Transiently binds heme delivered by CcmC and transfers the heme to apo-cytochromes in a process facilitated by CcmF and CcmH. The chain is Cytochrome c-type biogenesis protein CcmE from Pseudomonas paraeruginosa (strain DSM 24068 / PA7) (Pseudomonas aeruginosa (strain PA7)).